We begin with the raw amino-acid sequence, 99 residues long: Cysteine-rich C-terminal protein 1 (99 aa).

Disordered stretches follow at residues 1–42 (MSSQ…CCGS) and 65–99 (RRRR…CSGC). Residues 22-32 (APCPAPAPTPA) are compositionally biased toward pro residues. Low complexity predominate over residues 83 to 99 (QRSQRSNNRSSGCCSGC).

The polypeptide is Cysteine-rich C-terminal protein 1 (CRCT1) (Homo sapiens (Human)).